The chain runs to 220 residues: Probable nicotinate-nucleotide adenylyltransferase (220 aa).

Belongs to the NadD family.

It catalyses the reaction nicotinate beta-D-ribonucleotide + ATP + H(+) = deamido-NAD(+) + diphosphate. The protein operates within cofactor biosynthesis; NAD(+) biosynthesis; deamido-NAD(+) from nicotinate D-ribonucleotide: step 1/1. Functionally, catalyzes the reversible adenylation of nicotinate mononucleotide (NaMN) to nicotinic acid adenine dinucleotide (NaAD). This is Probable nicotinate-nucleotide adenylyltransferase from Yersinia enterocolitica serotype O:8 / biotype 1B (strain NCTC 13174 / 8081).